The primary structure comprises 165 residues: Anaerobic nitrite reductase GLB1 (165 aa).

Residues 12–162 (VFGEEQEALV…LVAAIKREMK (151 aa)) enclose the Globin domain. A Homodimerization motif is present at residues 45–49 (EIAPS). Residues Ser-55, Lys-69, His-73, Arg-103, Thr-107, and His-108 each coordinate heme b. The Homodimerization motif lies at 115–127 (DGHFEVTGFALLE).

It belongs to the plant globin family. In terms of assembly, homodimer. Requires heme b as cofactor. In vegetative but not in embryonic organs.

The protein resides in the cytoplasm. The protein localises to the nucleus. It carries out the reaction Fe(III)-heme b-[protein] + nitric oxide + H2O = Fe(II)-heme b-[protein] + nitrite + 2 H(+). Phytoglobin that reduces nitrite to nitric oxide (NO) under anoxic conditions (e.g. during flooding or in waterlogged soil). May not function as an oxygen storage or transport protein. Has an unusually high affinity for O(2) through an hexacoordinate heme iron because of a very low dissociation constant. This is Anaerobic nitrite reductase GLB1 (HB) from Zea mays subsp. parviglumis (Balsas teosinte).